A 162-amino-acid polypeptide reads, in one-letter code: MAELIIVYFSSKSNNTHRFVQKLGLPAQRIPVDNRPLEVSTHYLLIVPTYAAGGSDAKGAVPKQVIRFLNNPNNRKHCKGVISSGNTNFGDTFALAGPIISRKLQVPLLHQFELLGTATDVKKVQAIFARLKHHTHDKQKQTNNLITERTHPCHKPMRHTSH.

The protein belongs to the NrdI family.

Functionally, probably involved in ribonucleotide reductase function. The polypeptide is Protein NrdI (Streptococcus pyogenes serotype M2 (strain MGAS10270)).